The following is a 292-amino-acid chain: Putative OX-2 membrane glycoprotein homolog (292 aa).

Positions 1 to 18 are cleaved as a signal peptide; the sequence is MSPLMLRLLPLLCIIISA. Positions 24-136 constitute an Ig-like V-type domain; it reads PETSPSLVYE…TFTVDNEKTS (113 aa). Cys-42 and Cys-126 are disulfide-bonded. Asn-45, Asn-57, Asn-72, and Asn-195 each carry an N-linked (GlcNAc...) asparagine; by host glycan. One can recognise an Ig-like C2-type domain in the interval 147 to 237; sequence PIVVLYFRYL…TNQKASALVT (91 aa). A helical transmembrane segment spans residues 263–283; that stretch reads VFTWIVPLILILIISVMVLLI.

The protein resides in the host membrane. This is Putative OX-2 membrane glycoprotein homolog (U85) from Human herpesvirus 6B (strain Z29) (HHV-6 variant B).